We begin with the raw amino-acid sequence, 146 residues long: Large ribosomal subunit protein uL15 (146 aa).

The segment at 1–56 (MRLHDLRPVPGSRQKPTRKGQGIGSGLGKTAGRGQKGQKARSGGGVRPGFEGGQMP) is disordered. 2 stretches are compositionally biased toward gly residues: residues 21–35 (QGIG…GRGQ) and 42–52 (SGGGVRPGFEG).

It belongs to the universal ribosomal protein uL15 family. As to quaternary structure, part of the 50S ribosomal subunit.

In terms of biological role, binds to the 23S rRNA. This is Large ribosomal subunit protein uL15 from Carboxydothermus hydrogenoformans (strain ATCC BAA-161 / DSM 6008 / Z-2901).